The sequence spans 412 residues: Protein trichome birefringence-like 13 (412 aa).

Residues 9–29 traverse the membrane as a helical; Signal-anchor for type II membrane protein segment; sequence PSLFPLLSLLCFISIFLLLSL. A GDS motif motif is present at residues 137 to 139; that stretch reads GDS. The DCXHWCLPGXXDXWN motif signature appears at 385-399; it reads DCMHWCLPGLTDTWN.

It belongs to the PC-esterase family. TBL subfamily.

The protein resides in the membrane. In terms of biological role, may act as a bridging protein that binds pectin and other cell wall polysaccharides. Probably involved in maintaining esterification of pectins. May be involved in the specific O-acetylation of cell wall polymers. The polypeptide is Protein trichome birefringence-like 13 (TBL13) (Arabidopsis thaliana (Mouse-ear cress)).